A 238-amino-acid chain; its full sequence is 2-C-methyl-D-erythritol 4-phosphate cytidylyltransferase (238 aa).

The protein belongs to the IspD/TarI cytidylyltransferase family. IspD subfamily.

The catalysed reaction is 2-C-methyl-D-erythritol 4-phosphate + CTP + H(+) = 4-CDP-2-C-methyl-D-erythritol + diphosphate. Its pathway is isoprenoid biosynthesis; isopentenyl diphosphate biosynthesis via DXP pathway; isopentenyl diphosphate from 1-deoxy-D-xylulose 5-phosphate: step 2/6. Catalyzes the formation of 4-diphosphocytidyl-2-C-methyl-D-erythritol from CTP and 2-C-methyl-D-erythritol 4-phosphate (MEP). The chain is 2-C-methyl-D-erythritol 4-phosphate cytidylyltransferase from Aliivibrio fischeri (strain ATCC 700601 / ES114) (Vibrio fischeri).